The sequence spans 558 residues: Armadillo repeat-containing X-linked protein 5 (558 aa).

2 stretches are compositionally biased toward basic and acidic residues: residues 1–14 and 139–156; these read MVDS…RGKA and KSHD…REEA. Disordered regions lie at residues 1–34 and 139–163; these read MVDS…NGKT and KSHD…MKSS. 4 ARM repeats span residues 300–339, 422–461, 463–503, and 520–558; these read CKSR…GISP, VKFE…CLSK, HANT…NINF, and SELI…ILKL.

It belongs to the eutherian X-chromosome-specific Armcx family.

This Pongo abelii (Sumatran orangutan) protein is Armadillo repeat-containing X-linked protein 5 (ARMCX5).